A 349-amino-acid polypeptide reads, in one-letter code: tRNA N6-adenosine threonylcarbamoyltransferase (349 aa).

Residues histidine 114 and histidine 118 each coordinate Fe cation. Substrate is bound by residues isoleucine 136–glycine 140, aspartate 169, glycine 182, and asparagine 280. Position 308 (aspartate 308) interacts with Fe cation.

The protein belongs to the KAE1 / TsaD family. It depends on Fe(2+) as a cofactor.

The protein resides in the cytoplasm. The catalysed reaction is L-threonylcarbamoyladenylate + adenosine(37) in tRNA = N(6)-L-threonylcarbamoyladenosine(37) in tRNA + AMP + H(+). Required for the formation of a threonylcarbamoyl group on adenosine at position 37 (t(6)A37) in tRNAs that read codons beginning with adenine. Is involved in the transfer of the threonylcarbamoyl moiety of threonylcarbamoyl-AMP (TC-AMP) to the N6 group of A37, together with TsaE and TsaB. TsaD likely plays a direct catalytic role in this reaction. In Ehrlichia chaffeensis (strain ATCC CRL-10679 / Arkansas), this protein is tRNA N6-adenosine threonylcarbamoyltransferase.